Reading from the N-terminus, the 256-residue chain is Imidazole glycerol phosphate synthase subunit HisF (256 aa).

Active-site residues include aspartate 11 and aspartate 130.

Belongs to the HisA/HisF family. Heterodimer of HisH and HisF.

It localises to the cytoplasm. The catalysed reaction is 5-[(5-phospho-1-deoxy-D-ribulos-1-ylimino)methylamino]-1-(5-phospho-beta-D-ribosyl)imidazole-4-carboxamide + L-glutamine = D-erythro-1-(imidazol-4-yl)glycerol 3-phosphate + 5-amino-1-(5-phospho-beta-D-ribosyl)imidazole-4-carboxamide + L-glutamate + H(+). It participates in amino-acid biosynthesis; L-histidine biosynthesis; L-histidine from 5-phospho-alpha-D-ribose 1-diphosphate: step 5/9. Functionally, IGPS catalyzes the conversion of PRFAR and glutamine to IGP, AICAR and glutamate. The HisF subunit catalyzes the cyclization activity that produces IGP and AICAR from PRFAR using the ammonia provided by the HisH subunit. This chain is Imidazole glycerol phosphate synthase subunit HisF, found in Psychrobacter sp. (strain PRwf-1).